A 202-amino-acid chain; its full sequence is MSANASALAGAVLAGGESRRMGRDKARLRLRGETLAQRQVRVLREAGAEPVVIVRRAEQRMSVRAVEQVCDEFVGAGPLAGVQAALKAAAAAGARWIAVLAVDMPAIEAAWFGDLRRACRKGKGAVVRHADGFEPLAAIYPINALATAERRLRRGERSMQRFVAALVRQRKMRVVALPEEERWRVANWNRPEDRDRERRKHA.

GTP-binding positions include 13-15 (LAG), Lys-25, Asp-71, and Asp-103. Mg(2+) is bound at residue Asp-103.

This sequence belongs to the MobA family. Mg(2+) is required as a cofactor.

The protein resides in the cytoplasm. The catalysed reaction is Mo-molybdopterin + GTP + H(+) = Mo-molybdopterin guanine dinucleotide + diphosphate. In terms of biological role, transfers a GMP moiety from GTP to Mo-molybdopterin (Mo-MPT) cofactor (Moco or molybdenum cofactor) to form Mo-molybdopterin guanine dinucleotide (Mo-MGD) cofactor. The protein is Probable molybdenum cofactor guanylyltransferase of Opitutus terrae (strain DSM 11246 / JCM 15787 / PB90-1).